The following is a 293-amino-acid chain: Diaminopimelate epimerase (293 aa).

Substrate-binding residues include N17, Q49, and N69. C78 functions as the Proton donor in the catalytic mechanism. Residues G79–N80, N169, N203, and E221–R222 contribute to the substrate site. C230 (proton acceptor) is an active-site residue. Substrate is bound at residue G231 to S232.

The protein belongs to the diaminopimelate epimerase family. In terms of assembly, homodimer.

It is found in the cytoplasm. The enzyme catalyses (2S,6S)-2,6-diaminopimelate = meso-2,6-diaminopimelate. The protein operates within amino-acid biosynthesis; L-lysine biosynthesis via DAP pathway; DL-2,6-diaminopimelate from LL-2,6-diaminopimelate: step 1/1. Its function is as follows. Catalyzes the stereoinversion of LL-2,6-diaminopimelate (L,L-DAP) to meso-diaminopimelate (meso-DAP), a precursor of L-lysine and an essential component of the bacterial peptidoglycan. The sequence is that of Diaminopimelate epimerase from Methylobacterium sp. (strain 4-46).